The sequence spans 96 residues: MQVDDVLLSRLEKLSFLKISEDKREEIVSQLSEIVNFVENLSLLDTQNVDEKFAMSNDSTFLREDTAFCDTSINESILKNAPLSSDNFFVVPKIIE.

Belongs to the GatC family. Heterotrimer of A, B and C subunits.

It catalyses the reaction L-glutamyl-tRNA(Gln) + L-glutamine + ATP + H2O = L-glutaminyl-tRNA(Gln) + L-glutamate + ADP + phosphate + H(+). The enzyme catalyses L-aspartyl-tRNA(Asn) + L-glutamine + ATP + H2O = L-asparaginyl-tRNA(Asn) + L-glutamate + ADP + phosphate + 2 H(+). Allows the formation of correctly charged Asn-tRNA(Asn) or Gln-tRNA(Gln) through the transamidation of misacylated Asp-tRNA(Asn) or Glu-tRNA(Gln) in organisms which lack either or both of asparaginyl-tRNA or glutaminyl-tRNA synthetases. The reaction takes place in the presence of glutamine and ATP through an activated phospho-Asp-tRNA(Asn) or phospho-Glu-tRNA(Gln). This Sulfurimonas denitrificans (strain ATCC 33889 / DSM 1251) (Thiomicrospira denitrificans (strain ATCC 33889 / DSM 1251)) protein is Aspartyl/glutamyl-tRNA(Asn/Gln) amidotransferase subunit C.